The primary structure comprises 132 residues: uncharacterized protein (132 aa).

4 consecutive transmembrane segments (helical) span residues 15 to 37 (FPEY…LLLY), 49 to 71 (AFIP…LRLF), 81 to 103 (VILT…LALV), and 110 to 129 (LAAT…MAFV).

It is found in the cell membrane. This is an uncharacterized protein from Archaeoglobus fulgidus (strain ATCC 49558 / DSM 4304 / JCM 9628 / NBRC 100126 / VC-16).